We begin with the raw amino-acid sequence, 427 residues long: Tol-Pal system protein TolB (427 aa).

A signal peptide spans 1–27 (MPVSLLRALLVFSLLCLGLSATRAAHA).

It belongs to the TolB family. The Tol-Pal system is composed of five core proteins: the inner membrane proteins TolA, TolQ and TolR, the periplasmic protein TolB and the outer membrane protein Pal. They form a network linking the inner and outer membranes and the peptidoglycan layer.

Its subcellular location is the periplasm. In terms of biological role, part of the Tol-Pal system, which plays a role in outer membrane invagination during cell division and is important for maintaining outer membrane integrity. The chain is Tol-Pal system protein TolB from Thiobacillus denitrificans (strain ATCC 25259 / T1).